The chain runs to 209 residues: Chaperone protein TorD (209 aa).

It belongs to the TorD/DmsD family. TorD subfamily.

The protein localises to the cytoplasm. Involved in the biogenesis of TorA. Acts on TorA before the insertion of the molybdenum cofactor and, as a result, probably favors a conformation of the apoenzyme that is competent for acquiring the cofactor. The chain is Chaperone protein TorD from Shewanella sp. (strain MR-4).